Here is a 239-residue protein sequence, read N- to C-terminus: Lactate utilization protein A (239 aa).

Belongs to the LutA/YkgE family.

Is involved in L-lactate degradation and allows cells to grow with lactate as the sole carbon source. The chain is Lactate utilization protein A from Shouchella clausii (strain KSM-K16) (Alkalihalobacillus clausii).